A 237-amino-acid polypeptide reads, in one-letter code: Phosphoribosylaminoimidazole-succinocarboxamide synthase (237 aa).

Belongs to the SAICAR synthetase family.

It carries out the reaction 5-amino-1-(5-phospho-D-ribosyl)imidazole-4-carboxylate + L-aspartate + ATP = (2S)-2-[5-amino-1-(5-phospho-beta-D-ribosyl)imidazole-4-carboxamido]succinate + ADP + phosphate + 2 H(+). Its pathway is purine metabolism; IMP biosynthesis via de novo pathway; 5-amino-1-(5-phospho-D-ribosyl)imidazole-4-carboxamide from 5-amino-1-(5-phospho-D-ribosyl)imidazole-4-carboxylate: step 1/2. The sequence is that of Phosphoribosylaminoimidazole-succinocarboxamide synthase from Escherichia coli O127:H6 (strain E2348/69 / EPEC).